Here is a 547-residue protein sequence, read N- to C-terminus: CTP synthase (547 aa).

The interval 1–265 (MARYIFITGG…DQAVLDAFDI (265 aa)) is amidoligase domain. A CTP-binding site is contributed by Ser13. Ser13 is a binding site for UTP. ATP-binding positions include 14–19 (SLGKGL) and Asp71. Positions 71 and 139 each coordinate Mg(2+). Residues 146–148 (DIE), 186–191 (KTKPTQ), and Lys222 contribute to the CTP site. Residues 186–191 (KTKPTQ) and Lys222 contribute to the UTP site. The Glutamine amidotransferase type-1 domain maps to 291 to 546 (KVAIVGKYTQ…IRAAKENSRL (256 aa)). Gly353 contacts L-glutamine. Cys380 serves as the catalytic Nucleophile; for glutamine hydrolysis. L-glutamine-binding positions include 381 to 384 (LGMQ), Glu404, and Arg474. Active-site residues include His519 and Glu521.

Belongs to the CTP synthase family. Homotetramer.

The catalysed reaction is UTP + L-glutamine + ATP + H2O = CTP + L-glutamate + ADP + phosphate + 2 H(+). It catalyses the reaction L-glutamine + H2O = L-glutamate + NH4(+). It carries out the reaction UTP + NH4(+) + ATP = CTP + ADP + phosphate + 2 H(+). The protein operates within pyrimidine metabolism; CTP biosynthesis via de novo pathway; CTP from UDP: step 2/2. Allosterically activated by GTP, when glutamine is the substrate; GTP has no effect on the reaction when ammonia is the substrate. The allosteric effector GTP functions by stabilizing the protein conformation that binds the tetrahedral intermediate(s) formed during glutamine hydrolysis. Inhibited by the product CTP, via allosteric rather than competitive inhibition. In terms of biological role, catalyzes the ATP-dependent amination of UTP to CTP with either L-glutamine or ammonia as the source of nitrogen. Regulates intracellular CTP levels through interactions with the four ribonucleotide triphosphates. The sequence is that of CTP synthase from Roseobacter denitrificans (strain ATCC 33942 / OCh 114) (Erythrobacter sp. (strain OCh 114)).